Reading from the N-terminus, the 168-residue chain is Peptide deformylase 1 (168 aa).

Positions 91 and 133 each coordinate Fe cation. Glu-134 is an active-site residue. Fe cation is bound at residue His-137.

The protein belongs to the polypeptide deformylase family. It depends on Fe(2+) as a cofactor.

It catalyses the reaction N-terminal N-formyl-L-methionyl-[peptide] + H2O = N-terminal L-methionyl-[peptide] + formate. Removes the formyl group from the N-terminal Met of newly synthesized proteins. Requires at least a dipeptide for an efficient rate of reaction. N-terminal L-methionine is a prerequisite for activity but the enzyme has broad specificity at other positions. This chain is Peptide deformylase 1, found in Vibrio vulnificus (strain YJ016).